The chain runs to 1174 residues: Pecanex-like protein 4 (1174 aa).

14 helical membrane-spanning segments follow: residues 40–60 (IYVN…TGTL), 72–92 (AAAL…LISV), 140–160 (TVFH…YLLP), 173–193 (TAVL…SLIV), 217–237 (LYIF…NIPA), 244–264 (ILHI…LPPP), 284–304 (SMST…AAVV), 307–327 (FIPS…LLSL), 366–386 (FLFI…HHYV), 394–414 (SGAQ…VWIL), 451–471 (IGAV…VAFL), 543–563 (LIQF…LWTE), 580–600 (VFAP…SPLL), and 643–663 (LTAA…LPGS). Over residues 785-797 (PSTQENKTENTGE) the composition is skewed to polar residues. The tract at residues 785–875 (PSTQENKTEN…DDHSAGTGPK (91 aa)) is disordered. An N-linked (GlcNAc...) asparagine glycan is attached at N790. Residues 798–810 (ASPALPPAANSSP) show a composition bias toward low complexity. Over residues 835-846 (PAIKNRKEKLQS) the composition is skewed to basic and acidic residues. N-linked (GlcNAc...) asparagine glycans are attached at residues N1122 and N1149.

It belongs to the pecanex family.

Its subcellular location is the membrane. This is Pecanex-like protein 4 from Mus musculus (Mouse).